Here is a 407-residue protein sequence, read N- to C-terminus: Peptidase T (407 aa).

A Zn(2+)-binding site is contributed by H78. The active site involves D80. D139 contacts Zn(2+). E173 functions as the Proton acceptor in the catalytic mechanism. Zn(2+)-binding residues include E174, D196, and H378.

This sequence belongs to the peptidase M20B family. Zn(2+) serves as cofactor.

The protein resides in the cytoplasm. The enzyme catalyses Release of the N-terminal residue from a tripeptide.. Functionally, cleaves the N-terminal amino acid of tripeptides. In Shewanella halifaxensis (strain HAW-EB4), this protein is Peptidase T.